A 358-amino-acid polypeptide reads, in one-letter code: Aminomethyltransferase (358 aa).

Belongs to the GcvT family. As to quaternary structure, the glycine cleavage system is composed of four proteins: P, T, L and H.

The catalysed reaction is N(6)-[(R)-S(8)-aminomethyldihydrolipoyl]-L-lysyl-[protein] + (6S)-5,6,7,8-tetrahydrofolate = N(6)-[(R)-dihydrolipoyl]-L-lysyl-[protein] + (6R)-5,10-methylene-5,6,7,8-tetrahydrofolate + NH4(+). Functionally, the glycine cleavage system catalyzes the degradation of glycine. The sequence is that of Aminomethyltransferase from Francisella tularensis subsp. tularensis (strain WY96-3418).